A 112-amino-acid polypeptide reads, in one-letter code: Large ribosomal subunit protein eL33y (112 aa).

The protein belongs to the eukaryotic ribosomal protein eL33 family.

This is Large ribosomal subunit protein eL33y (RPL35AC) from Arabidopsis thaliana (Mouse-ear cress).